Consider the following 445-residue polypeptide: MNTSPVRMDDLPLNRFHCRIAALTFGAHLTDGYVLGVIGYAIIQLTPAMQLTPFMAGMIGGSALLGLFLGSLVLGWISDHIGRQKIFTFSFLLITLASFLQFFATTPEHLIGLRILIGIGLGGDYSVGHTLLAEFSPRRHRGILLGAFSVVWTVGYVLASIAGHHFISENPEAWRWLLASAALPALLITLLRWGTPESPRWLLRQGRFAEAHAIVHRYFGPHVLLGDEVVTATHKHIKTLFSSRYWRRTAFNSVFFVCLVIPWFVIYTWLPTIAQTIGLEDALTASLMLNALLIVGALLGLVLTHLLAHRKFLLGSFLLLAATLVVMACLPSGSSLTLLLFVLFSTTISAVSNLVGILPAESFPTDIRSLGVGFATAMSRLGAAVSTGLLPWVLAQWGMQVTLLLLATVLLVGFVVTWLWAPETKALPLVAAGNVGGANEHSVSV.

Residues 1–22 (MNTSPVRMDDLPLNRFHCRIAA) are Cytoplasmic-facing. A helical membrane pass occupies residues 23–43 (LTFGAHLTDGYVLGVIGYAII). Residues 44–56 (QLTPAMQLTPFMA) are Periplasmic-facing. The chain crosses the membrane as a helical span at residues 57–77 (GMIGGSALLGLFLGSLVLGWI). At 78-85 (SDHIGRQK) the chain is on the cytoplasmic side. The chain crosses the membrane as a helical span at residues 86–106 (IFTFSFLLITLASFLQFFATT). At 107 to 114 (PEHLIGLR) the chain is on the periplasmic side. Residues 115–135 (ILIGIGLGGDYSVGHTLLAEF) traverse the membrane as a helical segment. Over 136-142 (SPRRHRG) the chain is Cytoplasmic. Residues 143–163 (ILLGAFSVVWTVGYVLASIAG) traverse the membrane as a helical segment. At 164–175 (HHFISENPEAWR) the chain is on the periplasmic side. Residues 176 to 196 (WLLASAALPALLITLLRWGTP) form a helical membrane-spanning segment. Over 197–253 (ESPRWLLRQGRFAEAHAIVHRYFGPHVLLGDEVVTATHKHIKTLFSSRYWRRTAFNS) the chain is Cytoplasmic. The chain crosses the membrane as a helical span at residues 254-274 (VFFVCLVIPWFVIYTWLPTIA). Topologically, residues 275 to 286 (QTIGLEDALTAS) are periplasmic. Residues 287 to 307 (LMLNALLIVGALLGLVLTHLL) form a helical membrane-spanning segment. Topologically, residues 308 to 311 (AHRK) are cytoplasmic. A helical membrane pass occupies residues 312 to 332 (FLLGSFLLLAATLVVMACLPS). The Periplasmic segment spans residues 333–337 (GSSLT). The chain crosses the membrane as a helical span at residues 338-358 (LLLFVLFSTTISAVSNLVGIL). The Cytoplasmic segment spans residues 359–369 (PAESFPTDIRS). Residues 370–390 (LGVGFATAMSRLGAAVSTGLL) form a helical membrane-spanning segment. Residues 391–400 (PWVLAQWGMQ) lie on the Periplasmic side of the membrane. The helical transmembrane segment at 401–421 (VTLLLLATVLLVGFVVTWLWA) threads the bilayer. At 422–445 (PETKALPLVAAGNVGGANEHSVSV) the chain is on the cytoplasmic side.

It belongs to the major facilitator superfamily. Sugar transporter (TC 2.A.1.1) family.

It localises to the cell inner membrane. In Escherichia coli (strain K12), this protein is Inner membrane metabolite transport protein YgcS (ygcS).